The following is a 173-amino-acid chain: Large ribosomal subunit protein uL10 (173 aa).

It belongs to the universal ribosomal protein uL10 family. In terms of assembly, part of the ribosomal stalk of the 50S ribosomal subunit. The N-terminus interacts with L11 and the large rRNA to form the base of the stalk. The C-terminus forms an elongated spine to which L12 dimers bind in a sequential fashion forming a multimeric L10(L12)X complex.

In terms of biological role, forms part of the ribosomal stalk, playing a central role in the interaction of the ribosome with GTP-bound translation factors. This is Large ribosomal subunit protein uL10 from Bifidobacterium longum (strain DJO10A).